We begin with the raw amino-acid sequence, 147 residues long: MRKLALDLGTKSCGFAISDLLGIIASGLDNFIYEENDFTAVLAKIDEIMINYHHEIDTIVLGYPTNVYDGSKNERTYLIESFYALLKQHFLNHEKIKIVYEDERFSTKIATQRLKNSCVKAAKIKKVKDKMSAVVILESYLSKNHFN.

It belongs to the YqgF nuclease family.

Its subcellular location is the cytoplasm. Could be a nuclease involved in processing of the 5'-end of pre-16S rRNA. The protein is Putative pre-16S rRNA nuclease of Ureaplasma parvum serovar 3 (strain ATCC 27815 / 27 / NCTC 11736).